The sequence spans 533 residues: RNA end formation protein 2 (533 aa).

Disordered regions lie at residues 187 to 254, 260 to 279, and 321 to 344; these read SNST…SSMK, LFNK…SKKK, and SSST…PLKK. Residues 206–222 are compositionally biased toward basic and acidic residues; sequence KIKDSEKEKEKEKDKSK. The segment covering 242–252 has biased composition (low complexity); the sequence is SSPSPTASTSS. The segment covering 321 to 338 has biased composition (low complexity); the sequence is SSSTSGSSTTTVATPASS.

Interacts with FIR1. Component of the cleavage and polyadenylation factor (CPF) complex, which is composed of PTI1, SYC1, SSU72, GLC7, MPE1, REF2, PFS2, PTA1, YSH1/BRR5, SWD2, CFT2/YDH1, YTH1, CFT1/YHH1, FIP1 and PAP1. Component of the APT complex, which is a subcomplex of CPF, and is composed of PTI1, SYC1, SSU72, GLC7, REF2, PTA1 and SWD2.

Its subcellular location is the nucleus. Functionally, RNA-binding component of the cleavage and polyadenylation factor (CPF) complex, which plays a key role in polyadenylation-dependent pre-mRNA 3'-end formation and cooperates with cleavage factors including the CFIA complex and NAB4/CFIB. Negative regulator of poly(A) synthesis. Component of the APT complex, which may be involved in polyadenylation-independent transcript 3'-end formation. REF2 is required for 3'-end formation of snoRNAs. In Saccharomyces cerevisiae (strain ATCC 204508 / S288c) (Baker's yeast), this protein is RNA end formation protein 2 (REF2).